A 78-amino-acid chain; its full sequence is RNA-binding protein KhpA (78 aa).

The 50-residue stretch at 29 to 78 (TIIYELTVAKPDIGKIIGKEGRTIKAIRTLLVSVASRNNVKVSLEIMEDK) folds into the KH domain.

Belongs to the KhpA RNA-binding protein family.

The protein localises to the cytoplasm. Its function is as follows. A probable RNA-binding protein. The protein is RNA-binding protein KhpA of Chlamydia caviae (strain ATCC VR-813 / DSM 19441 / 03DC25 / GPIC) (Chlamydophila caviae).